A 671-amino-acid chain; its full sequence is DNA ligase (671 aa).

NAD(+) is bound by residues 32-36, 81-82, and Glu-113; these read DAEYD and SL. Residue Lys-115 is the N6-AMP-lysine intermediate of the active site. Arg-136, Glu-173, Lys-290, and Lys-314 together coordinate NAD(+). Zn(2+)-binding residues include Cys-408, Cys-411, Cys-426, and Cys-432. The BRCT domain occupies 593–671; it reads EIDSPFAGKT…EAEMIRLLDA (79 aa).

This sequence belongs to the NAD-dependent DNA ligase family. LigA subfamily. Requires Mg(2+) as cofactor. Mn(2+) is required as a cofactor.

It catalyses the reaction NAD(+) + (deoxyribonucleotide)n-3'-hydroxyl + 5'-phospho-(deoxyribonucleotide)m = (deoxyribonucleotide)n+m + AMP + beta-nicotinamide D-nucleotide.. In terms of biological role, DNA ligase that catalyzes the formation of phosphodiester linkages between 5'-phosphoryl and 3'-hydroxyl groups in double-stranded DNA using NAD as a coenzyme and as the energy source for the reaction. It is essential for DNA replication and repair of damaged DNA. This chain is DNA ligase, found in Salmonella schwarzengrund (strain CVM19633).